The following is a 339-amino-acid chain: D-erythrose-4-phosphate dehydrogenase (339 aa).

Residues 12–13 and R81 contribute to the NAD(+) site; that span reads RI. Substrate contacts are provided by residues 154–156, R200, 213–214, and R236; these read SCT and TR. Catalysis depends on C155, which acts as the Nucleophile. Residue N318 coordinates NAD(+).

The protein belongs to the glyceraldehyde-3-phosphate dehydrogenase family. Epd subfamily. Homotetramer.

Its subcellular location is the cytoplasm. The enzyme catalyses D-erythrose 4-phosphate + NAD(+) + H2O = 4-phospho-D-erythronate + NADH + 2 H(+). It functions in the pathway cofactor biosynthesis; pyridoxine 5'-phosphate biosynthesis; pyridoxine 5'-phosphate from D-erythrose 4-phosphate: step 1/5. Its function is as follows. Catalyzes the NAD-dependent conversion of D-erythrose 4-phosphate to 4-phosphoerythronate. The polypeptide is D-erythrose-4-phosphate dehydrogenase (Cronobacter sakazakii (strain ATCC BAA-894) (Enterobacter sakazakii)).